Consider the following 424-residue polypeptide: Na(+), Li(+), K(+)/H(+) antiporter (424 aa).

The next 12 helical transmembrane spans lie at 15–35 (VGEF…AIYF), 42–62 (GLAG…NLFG), 74–94 (MLVS…LANS), 105–125 (VAFT…QAMI), 141–161 (FYTT…VLFF), 165–185 (FELL…LRFY), 227–247 (LLFV…DLVI), 274–294 (TSFG…TVVI), 305–325 (WVFF…PMTS), 327–347 (FWIF…VVGL), 367–389 (AASL…TAWF), and 393–415 (WTFI…MFHL).

It belongs to the major facilitator superfamily.

It is found in the cell membrane. Its activity is regulated as follows. Norfloxacin transport is inhibited by CCCP. Its function is as follows. Exhibits dual functions as a Na(+)(Li(+)/K(+))/H(+) antiporter and a multidrug efflux pump. Catalyzes the efflux of Na(+), Li(+) and K(+) in exchange for external protons. Shows a preference for Na(+), followed by K(+) and Li(+). Can also function as a multidrug efflux pump. Transports ethidium bromide and norfloxacin. The protein is Na(+), Li(+), K(+)/H(+) antiporter of Planococcus maritimus.